Reading from the N-terminus, the 539-residue chain is Kynureninase 2 (539 aa).

Positions 60 to 87 are disordered; sequence DGGVAGETKEPRVPNGVSSATKPNGTVN. Over residues 75–87 the composition is skewed to polar residues; it reads GVSSATKPNGTVN. Pyridoxal 5'-phosphate contacts are provided by residues Leu-171, Thr-172, 199 to 202, Asp-290, His-293, and Tyr-315; that span reads FPSD. An N6-(pyridoxal phosphate)lysine modification is found at Lys-316. Residues 340 to 352 show a composition bias toward gly residues; that stretch reads GGGGSGGVGGGRG. The segment at 340-363 is disordered; it reads GGGGSGGVGGGRGEGGDGDGGDGG. Residues Trp-379 and Asn-407 each contribute to the pyridoxal 5'-phosphate site.

This sequence belongs to the kynureninase family. Homodimer. It depends on pyridoxal 5'-phosphate as a cofactor.

The protein resides in the cytoplasm. It catalyses the reaction L-kynurenine + H2O = anthranilate + L-alanine + H(+). It carries out the reaction 3-hydroxy-L-kynurenine + H2O = 3-hydroxyanthranilate + L-alanine + H(+). Its pathway is amino-acid degradation; L-kynurenine degradation; L-alanine and anthranilate from L-kynurenine: step 1/1. It functions in the pathway cofactor biosynthesis; NAD(+) biosynthesis; quinolinate from L-kynurenine: step 2/3. Functionally, catalyzes the cleavage of L-kynurenine (L-Kyn) and L-3-hydroxykynurenine (L-3OHKyn) into anthranilic acid (AA) and 3-hydroxyanthranilic acid (3-OHAA), respectively. The polypeptide is Kynureninase 2 (Chaetomium globosum (strain ATCC 6205 / CBS 148.51 / DSM 1962 / NBRC 6347 / NRRL 1970) (Soil fungus)).